The chain runs to 310 residues: Dihydroorotate dehydrogenase B (NAD(+)), catalytic subunit (310 aa).

FMN-binding positions include Ser-19 and 43–44 (KA). Residues Lys-43 and 67–71 (NAIGL) each bind substrate. FMN-binding residues include Asn-97 and Asn-125. Substrate is bound at residue Asn-125. The active-site Nucleophile is Cys-128. 2 residues coordinate FMN: Lys-163 and Ile-189. Residue 190-191 (NT) coordinates substrate. FMN-binding positions include Gly-215, 241-242 (GG), and 263-264 (GT).

The protein belongs to the dihydroorotate dehydrogenase family. Type 1 subfamily. Heterotetramer of 2 PyrK and 2 PyrD type B subunits. FMN serves as cofactor.

Its subcellular location is the cytoplasm. The catalysed reaction is (S)-dihydroorotate + NAD(+) = orotate + NADH + H(+). It functions in the pathway pyrimidine metabolism; UMP biosynthesis via de novo pathway; orotate from (S)-dihydroorotate (NAD(+) route): step 1/1. Functionally, catalyzes the conversion of dihydroorotate to orotate with NAD(+) as electron acceptor. The polypeptide is Dihydroorotate dehydrogenase B (NAD(+)), catalytic subunit (pyrD) (Bacillus pumilus (strain SAFR-032)).